The sequence spans 412 residues: [Pyruvate dehydrogenase (acetyl-transferring)] kinase isozyme 4, mitochondrial (412 aa).

One can recognise a Histidine kinase domain in the interval 138–368 (ILEYKDNCTV…DAIIYLKALS (231 aa)). Residues 254–261 (ELFKNAMR), D293, 312–313 (ST), and 329–334 (GFGYGL) contribute to the ATP site.

Belongs to the PDK/BCKDK protein kinase family. As to quaternary structure, homodimer. Interacts with the pyruvate dehydrogenase complex subunit DLAT, and is part of the multimeric pyruvate dehydrogenase complex that contains multiple copies of pyruvate dehydrogenase (E1), dihydrolipoamide acetyltransferase (DLAT, E2) and lipoamide dehydrogenase (DLD, E3). As to expression, ubiquitous; highest levels of expression in heart and skeletal muscle.

It localises to the mitochondrion matrix. It carries out the reaction L-seryl-[pyruvate dehydrogenase E1 alpha subunit] + ATP = O-phospho-L-seryl-[pyruvate dehydrogenase E1 alpha subunit] + ADP + H(+). Kinase that plays a key role in regulation of glucose and fatty acid metabolism and homeostasis via phosphorylation of the pyruvate dehydrogenase subunits PDHA1 and PDHA2. This inhibits pyruvate dehydrogenase activity, and thereby regulates metabolite flux through the tricarboxylic acid cycle, down-regulates aerobic respiration and inhibits the formation of acetyl-coenzyme A from pyruvate. Inhibition of pyruvate dehydrogenase decreases glucose utilization and increases fat metabolism in response to prolonged fasting and starvation. Plays an important role in maintaining normal blood glucose levels under starvation, and is involved in the insulin signaling cascade. Via its regulation of pyruvate dehydrogenase activity, plays an important role in maintaining normal blood pH and in preventing the accumulation of ketone bodies under starvation. In the fed state, mediates cellular responses to glucose levels and to a high-fat diet. Regulates both fatty acid oxidation and de novo fatty acid biosynthesis. Plays a role in the generation of reactive oxygen species. Protects detached epithelial cells against anoikis. Plays a role in cell proliferation via its role in regulating carbohydrate and fatty acid metabolism. In Rattus norvegicus (Rat), this protein is [Pyruvate dehydrogenase (acetyl-transferring)] kinase isozyme 4, mitochondrial (Pdk4).